The primary structure comprises 422 residues: uncharacterized protein (422 aa).

Residues 1-22 (MIQNNPKSIGSSSNKSARSSGS) are disordered. The span at 7–22 (KSIGSSSNKSARSSGS) shows a compositional bias: low complexity.

This is an uncharacterized protein from Acanthamoeba polyphaga mimivirus (APMV).